The sequence spans 540 residues: Probable G-protein coupled receptor 75 (540 aa).

Over 1–46 (MNTSAPLQNVPNATLLNMPPLHGGNSTSLQEGLRDFIHTATLVTCT) the chain is Extracellular. Asn2 and Asn25 each carry an N-linked (GlcNAc...) asparagine glycan. Residues 47 to 67 (FLLAIIFCLGSYGNFIVFLSF) traverse the membrane as a helical segment. The Cytoplasmic segment spans residues 68 to 86 (FDPSFRKFRTNFDFMILNL). The helical transmembrane segment at 87 to 107 (SFCDLFICGVTAPMFTFVLFF) threads the bilayer. Topologically, residues 108–120 (SSASSIPDSFCFT) are extracellular. A helical membrane pass occupies residues 121 to 141 (FHLTSSGFVIMSLKMVAVIAL). Over 142–160 (HRLRMVMGKQPNCTASFSC) the chain is Cytoplasmic. A helical membrane pass occupies residues 161–181 (ILLLTLLLWATSFTLATLATL). The Extracellular portion of the chain corresponds to 182–205 (RTNKSHLCLPMSSLMDGEGKAILS). N-linked (GlcNAc...) asparagine glycosylation occurs at Asn184. Residues 206–226 (LYVVDFTFCVAVVSVSYIMIA) form a helical membrane-spanning segment. Topologically, residues 227-318 (QTLRKNAQVK…INFSTAKDSK (92 aa)) are cytoplasmic. A helical membrane pass occupies residues 319-339 (AVVTCVVIVLSVLVCCLPLGI). Residues 340–350 (SLVQMVLSDNG) are Extracellular-facing. Residues 351-371 (SFILYQFELFGFTLIFFKSGL) form a helical membrane-spanning segment. The Cytoplasmic segment spans residues 372 to 540 (NPFIYSRNSA…SAKQIPIPSV (169 aa)). The interval 443 to 475 (DQACGPSHSKESAASPKVSAGHQPCGQSSSTPI) is disordered.

This sequence belongs to the G-protein coupled receptor 1 family. In terms of tissue distribution, highly expressed in brain and heart. Also detected in skeletal muscle, liver and kidney. Also expressed by islet cells (at protein level).

It is found in the cell membrane. Functionally, g protein-coupled receptor that is activated by the chemokine CCL5/RANTES. Probably coupled to heterotrimeric Gq proteins, it stimulates inositol trisphosphate production and calcium mobilization upon activation. Together with CCL5/RANTES, may play a role in neuron survival through activation of a downstream signaling pathway involving the PI3, Akt and MAP kinases. CCL5/RANTES may also regulate insulin secretion by pancreatic islet cells through activation of this receptor. This is Probable G-protein coupled receptor 75 (Gpr75) from Mus musculus (Mouse).